Reading from the N-terminus, the 157-residue chain is Ribosome maturation factor RimP (157 aa).

Belongs to the RimP family.

Its subcellular location is the cytoplasm. Functionally, required for maturation of 30S ribosomal subunits. The polypeptide is Ribosome maturation factor RimP (Synechococcus sp. (strain CC9311)).